We begin with the raw amino-acid sequence, 145 residues long: Peptidyl-prolyl cis-trans isomerase (145 aa).

The PPIase cyclophilin-type domain maps to 1–145 (MTQAILETEK…LSVKIVTDAA (145 aa)).

The protein belongs to the cyclophilin-type PPIase family.

The enzyme catalyses [protein]-peptidylproline (omega=180) = [protein]-peptidylproline (omega=0). In terms of biological role, PPIases accelerate the folding of proteins. It catalyzes the cis-trans isomerization of proline imidic peptide bonds in oligopeptides. This is Peptidyl-prolyl cis-trans isomerase (rot) from Synechococcus elongatus (strain ATCC 33912 / PCC 7942 / FACHB-805) (Anacystis nidulans R2).